The sequence spans 122 residues: MAKTYDPNNVFARILRGEIPCKKVLETEHALAFHDINPQAPTHILVIPKGAYVDMDDFSARATEAEIAGLFRAVGEVARGAGAAEPGYRILSNCGEDANQEVPHLHIHVFAGRRLGPMITKG.

The HIT domain maps to 10–120; the sequence is VFARILRGEI…AGRRLGPMIT (111 aa). The Histidine triad motif motif lies at 104 to 108; the sequence is HLHIH.

This is an uncharacterized protein from Azospirillum brasilense.